Consider the following 1149-residue polypeptide: DNA polymerase (1149 aa).

The segment covering M1–P28 has biased composition (polar residues). A disordered region spans residues M1–P49. Residues P31–P49 show a composition bias toward low complexity.

The protein belongs to the DNA polymerase type-B family. Heterodimer with the terminal protein; this heterodimer binds to bp 9 to 18 of the genome. Forms a complex with viral pTP, DBP and hosts NFIA and POU2F1/OCT1 for initiation of replication.

It is found in the host nucleus. It carries out the reaction DNA(n) + a 2'-deoxyribonucleoside 5'-triphosphate = DNA(n+1) + diphosphate. Eukaryotic-type DNA polymerase involved in viral genomic replication. DNA synthesis is protein primed, and acts in a strand displacement replication. Assembles in complex with viral pTP, DBP, host NFIA and host POU2F1/OCT1 on viral origin of replication. The polymerase covalently transfers dCMP onto pTP, thereby initiating complementary strand synthesis. The polypeptide is DNA polymerase (Canine adenovirus serotype 1 (strain CLL) (CAdV-1)).